Here is a 286-residue protein sequence, read N- to C-terminus: Fructose-bisphosphate aldolase (286 aa).

Position 50 (Ser50) interacts with D-glyceraldehyde 3-phosphate. The Proton donor role is filled by Asp85. Zn(2+) contacts are provided by His86, Asp107, Glu137, and His181. Residue Gly182 participates in dihydroxyacetone phosphate binding. His209 is a Zn(2+) binding site. Residues 210–212 (GGT) and 231–234 (NVNT) contribute to the dihydroxyacetone phosphate site.

The protein belongs to the class II fructose-bisphosphate aldolase family. Zn(2+) is required as a cofactor.

The catalysed reaction is beta-D-fructose 1,6-bisphosphate = D-glyceraldehyde 3-phosphate + dihydroxyacetone phosphate. The protein operates within carbohydrate degradation; glycolysis; D-glyceraldehyde 3-phosphate and glycerone phosphate from D-glucose: step 4/4. In terms of biological role, catalyzes the aldol condensation of dihydroxyacetone phosphate (DHAP or glycerone-phosphate) with glyceraldehyde 3-phosphate (G3P) to form fructose 1,6-bisphosphate (FBP) in gluconeogenesis and the reverse reaction in glycolysis. The protein is Fructose-bisphosphate aldolase (fba) of Staphylococcus epidermidis (strain ATCC 35984 / DSM 28319 / BCRC 17069 / CCUG 31568 / BM 3577 / RP62A).